The primary structure comprises 1441 residues: MICILVLITVAAASPVYQRCFQDGAIVKQNPSKEAVTEVCLKDDVSMIKTEARYVRNATGVFSNNVAIRKWLVSDWHDCRPKKIVGGHINVIEVGDDLSLHTESYVCSADCTIGVDKETAQVRLQTDTTNHFEIAGTTVKSGWFKSTTYITLDQTCEHLKVSCGPKSVQFHACFNQHMSCVRFLHRTILPGSIANSICQNIEIIILVTLTLLIFILLSILSKTYICYLLMPIFIPIAYIYGIIYNKSCKKCKLCGLVYHPFTECGTHCVCGARYDTSDRMKLHRASGLCPGYKSLRAARVMCKSKGPASILSIITAVLVLTFVTPINSMVLGESKETFELEDLPDDMLEMASRINSYYLTCILNYAVSWGLVIIGLLIGLLFKKYQHRFLNVYAMYCEECDMYHDKSGLKRHGDFTNKCRQCTCGQYEDAAGLMAHRKTYNCLVQYKAKWMMNFLIIYIFLILIKDSAIVVQAAGTDFTTCLETESINWNCTGPFLNLGNCQKQQKKEPYTNIATQLKGLKAISVLDVPIITGIPDDIAGALRYIEEKEDFHVQLTIEYAMLSKYCDYYTQFSDNSGYSQTTWRVYLRSHDFEACILYPNQHFCRCVKNGEKCSSSNWDFANEMKDYYSGKQTKFDKDLNLALTALHHAFRGTSSAYIATMLSKKSNDDLIAYTNKIKTKFPGNALLKAIIDYIAYMKSLPGMANFKYDEFWDELLYKPNPAKASNLARGKESSYNFKLAISSKSIKTCKNVKDVACLSPRSGAIYASIIACGEPNGPSVYRKPSGGVFQSSTDRSIYCLLDSHCLEEFEAIGQEELDAVKKSKCWEIEYPDVKLIQEGDGTKSCRMKDSGNCNVATNRWPVIQCENDKFYYSELQKDYDKAQDIGHYCLSPGCTTVRYPINPKHISNCNWQVSRSSIAKIDVHNIEDIEQYKKAITQKLQTSLSLFKYAKTKNLPHIKPIYKYITIEGTETAEGIESAYIESEVPALAGTSIGFKINSKEGKHLLDVIAYVKSASYSSVYTKLYSTGPTSGINTKHDELCTGPCPANINHQVGWLTFARERTSSWGCEEFGCLAVSDGCVFGSCQDIIKEELSVYRKETEEVTDVELCLTFSDKTYCTNLNPVTPIITDLFEVQFKTVETYSLPRIVAVQNHEIKIGQINDLGVYSKGCGNVQKVNGTIYGNGVPRFDYLCHLASRKEVIVRKCFDNDYQACKFLQSPASYRLEEDSGTVTIIDYKKILGTIKMKAILGDVKYKTFADSVDITAEGSCTGCINCFENIHCELTLHTTIEASCPIKSSCTVFHDRILVTPNEHKYALKMVCTEKPGNTLTIKVCNTKVEASMALVDAKPIIELAPVDQTAYIREKDERCKTWMCRVRDEGLQVILEPFKNLFGSYIGIFYTFIISIVVLLVIIYVLLPICFKLRDTLRKHEDAYKREMKIR.

A signal peptide spans 1-13; sequence MICILVLITVAAA. Over 14–200 the chain is Lumenal; the sequence is SPVYQRCFQD…GSIANSICQN (187 aa). N-linked (GlcNAc...) asparagine; by host glycosylation is present at N57. The segment at 201–221 is a transmembrane helix; it reads IEIIILVTLTLLIFILLSILS. Over 222–305 the chain is Cytoplasmic; it reads KTYICYLLMP…RAARVMCKSK (84 aa). A transmembrane span lies at residues 306-326; the sequence is GPASILSIITAVLVLTFVTPI. Residues 327–361 are Lumenal-facing; it reads NSMVLGESKETFELEDLPDDMLEMASRINSYYLTC. Positions 362–382 form a transmembrane segment; that stretch reads ILNYAVSWGLVIIGLLIGLLF. Residues 383 to 450 are Cytoplasmic-facing; it reads KKYQHRFLNV…NCLVQYKAKW (68 aa). Positions 451–471 form a transmembrane segment; it reads MMNFLIIYIFLILIKDSAIVV. At 472-1395 the chain is on the lumenal side; that stretch reads QAAGTDFTTC…EPFKNLFGSY (924 aa). A glycan (N-linked (GlcNAc...) asparagine; by host) is linked at N490. Residues 1066–1087 form a fusion peptide region; it reads WGCEEFGCLAVSDGCVFGSCQD. Residue N1177 is glycosylated (N-linked (GlcNAc...) asparagine; by host). The chain crosses the lipid bilayer at residues 1396-1416; it reads IGIFYTFIISIVVLLVIIYVL. Over 1417–1433 the chain is Cytoplasmic; it reads LPICFKLRDTLRKHEDA.

It belongs to the orthobunyaviruses M polyprotein family. Glycoprotein C and Glycoprotein N interact with each other.

The protein localises to the virion membrane. Its subcellular location is the host Golgi apparatus membrane. The protein resides in the host endoplasmic reticulum membrane. Glycoprotein C and glycoprotein N interact with each other and are present at the surface of the virion. They are able to attach the virion to a cell receptor and to promote fusion of membranes after endocytosis of the virion. The polypeptide is Envelopment polyprotein (GP) (Bunyavirus La Crosse (isolate Human/United States/L78/1978)).